Here is a 285-residue protein sequence, read N- to C-terminus: Proteasome subunit beta (285 aa).

Residues 1–50 (MTAEHPARLPQAFMTPGSSSFVDFLAAHDPSLLPSSRALPAGSAPPAPHG) constitute a propeptide, removed in mature form; by autocatalysis. Thr-51 (nucleophile) is an active-site residue. The disordered stretch occupies residues 266 to 285 (RTRQARSSRSRHGSLGGDLR).

It belongs to the peptidase T1B family. As to quaternary structure, the 20S proteasome core is composed of 14 alpha and 14 beta subunits that assemble into four stacked heptameric rings, resulting in a barrel-shaped structure. The two inner rings, each composed of seven catalytic beta subunits, are sandwiched by two outer rings, each composed of seven alpha subunits. The catalytic chamber with the active sites is on the inside of the barrel. Has a gated structure, the ends of the cylinder being occluded by the N-termini of the alpha-subunits. Is capped by the proteasome-associated ATPase, ARC.

Its subcellular location is the cytoplasm. The enzyme catalyses Cleavage of peptide bonds with very broad specificity.. The protein operates within protein degradation; proteasomal Pup-dependent pathway. With respect to regulation, the formation of the proteasomal ATPase ARC-20S proteasome complex, likely via the docking of the C-termini of ARC into the intersubunit pockets in the alpha-rings, may trigger opening of the gate for substrate entry. Interconversion between the open-gate and close-gate conformations leads to a dynamic regulation of the 20S proteasome proteolysis activity. In terms of biological role, component of the proteasome core, a large protease complex with broad specificity involved in protein degradation. The protein is Proteasome subunit beta of Sanguibacter keddieii (strain ATCC 51767 / DSM 10542 / NCFB 3025 / ST-74).